The sequence spans 846 residues: MSHSQCTQISDNYPPSLGISDDTSVSLCPSDGLQPFTPDLTYTHQFNFTQPAPLLPPPETLERVGPRNKKIYVLWTEMVNDDFVTWWLSTEYGSQMKRNIFEGKHQSECWQHFHQVAAIQDGSPKVMYKVCNHILSHPADRHRGTSSMNKHYSSGVNCRKSVPVSKDIKRLIQDGMHSAPQKTHYTAKAWMERLVTFITTSRLPFQLVEYPQFRALIEMAQRAPLLPILPCAKTIRNHLQELVQERQKSLLQKLSQGAKLSIALDCWTSPFRQSFMAVTGYFLDVDWNYREILLGFEPLSGSHTGAYLSTVLQQVLEEHQIEARILTVTTDNAANNSTLMNSLSESLQSIELPNQIPVIHIPCMAHIIQLSLNELLGRMEVNPRNDREEIEWTERDKSAQPENQDIIHTLEKIRRLAVFINRSPQRRENFLYLQSKEPKLVPIQDVRTRWNSTFLMLYRARKLQSTFDEYCSEYGQPDLKLTKEEWRQVDYLLSITKPFFTFTTSLSQTKEVTIHSVFAIYNYLFTHLEKSKEKLSEYYAMTDHVGGDLYAIGTILAPQNKLEFFSTSEWEPEWRVRYRKSLEEYIVPYEKRYSETQTQSIPIRQILTGGISDIDMLVTAATSLQPRTTAHDEISRYLGSSTQLMNPRIFWKDHQFKYPILASLAQYILTTPASGSGVERLFNSARDICHYRRGSLKPHTIKELMLFMCTTKFDLESEELSLMDEYLTTQEIQRAREERDAQQALEAQNTKYDFDPISDSEEAESEDESLVLPQSPQASQARSQRSLGKRPAREEEPLIELDGNEEDEVPLPYNRHLVTVSSTQRRSSGRQPKRSKRDEDFVYETP.

The BED-type; degenerate zinc-finger motif lies at 104–166; the sequence is KHQSECWQHF…NCRKSVPVSK (63 aa). The tract at residues 734-846 is disordered; it reads RAREERDAQQ…RDEDFVYETP (113 aa). Residues 756 to 769 show a composition bias toward acidic residues; that stretch reads PISDSEEAESEDES. Residues 773 to 786 show a composition bias toward low complexity; it reads PQSPQASQARSQRS. Acidic residues predominate over residues 797–809; that stretch reads PLIELDGNEEDEV.

It localises to the nucleus. Functionally, putative transcriptional regulator; part of the gene cluster that mediates the biosynthesis of polyesters containing 2,4-dihydroxy-6-(2-hydroxypropyl)benzoate and 3-hydroxybutyrate moieties, such as talapolyester G, 15G256beta and 15G256beta-2; as well as to oxidized derivatives such as 15G256alpha. This Talaromyces stipitatus (strain ATCC 10500 / CBS 375.48 / QM 6759 / NRRL 1006) (Penicillium stipitatum) protein is Putative transcriptional regulator tpeD.